A 215-amino-acid polypeptide reads, in one-letter code: Vesicle-trafficking protein SEC22b (215 aa).

Residues V2–A194 are Cytoplasmic-facing. Positions M6–I119 constitute a Longin domain. Residue K38 is modified to N6-acetyllysine. The region spanning N134 to A194 is the v-SNARE coiled-coil homology domain. Residue S137 is modified to Phosphoserine. At T140 the chain carries Phosphothreonine. S164, S168, S174, and S177 each carry phosphoserine. The helical; Anchor for type IV membrane protein transmembrane segment at K195–L215 threads the bilayer.

The protein belongs to the synaptobrevin family. Interacts with STX17. Component of two distinct SNARE complexes consisting of STX5, GOSR2/BOS1, BET1 and SEC22B or STX18, USE1L, BNIP1/SEC20L and SEC22B. YKT6 can probably replace SEC22B in either complex. Interacts with the COPII Sec23/24 complex composed of SEC23A and SEC24A; recruits SEC22B into COPII-coated vesicles to allow its transport from the endoplasmic reticulum to the Golgi. Interacts with BET1.

It localises to the endoplasmic reticulum membrane. It is found in the endoplasmic reticulum-Golgi intermediate compartment membrane. The protein resides in the golgi apparatus. The protein localises to the cis-Golgi network membrane. Its subcellular location is the trans-Golgi network membrane. It localises to the melanosome. Its function is as follows. SNARE involved in targeting and fusion of ER-derived transport vesicles with the Golgi complex as well as Golgi-derived retrograde transport vesicles with the ER. This Homo sapiens (Human) protein is Vesicle-trafficking protein SEC22b (SEC22B).